A 494-amino-acid chain; its full sequence is MASRILGSIKEEVTCPICLELLTEPLSLDCGHSFCQACITANHKESMLHQGERSCPLCRLPYQSENLRPNRHLASIVERLREVMLRPEERQNVDHCARHGEKLLLFCEQDGNIICWLCERSQEHRGHNTFLVEEVAQKYREKLQVALETMRQKQQDAEKLEADVRQEQASWKIQIQNDKTNIMAEFKQLRDILDCEESNELQNLEKEEKNILKRLVQSENDMVLQTQSVRVLISDLERRLQGSVVELLQDVDGVIKRIEKVTLQKPKTFLNEKRRVFRAPDLKRMLQVLKELTEVQRYWAHVTLVPSHPSYTIISEDGRQVRYQKPIRHLLVKVQYFYGVLGSPSITSGKHYWEVDVSNKRAWTLGVCVSLKCTANQSVSGTENYQPKNGYWVIGLRNAGNYRAFQSSFEFRDFLAGSRLTLSPPLIVPLFMTICPNRVGVFLDYEARTISFFNVTSNGFLIYKFSDCHFSYPVFPYFNPMTCELPMTLCSPRS.

Ala2 carries the post-translational modification N-acetylalanine. The RING-type zinc finger occupies 15–59; sequence CPICLELLTEPLSLDCGHSFCQACITANHKESMLHQGERSCPLCR. The B box-type zinc-finger motif lies at 91 to 132; the sequence is QNVDHCARHGEKLLLFCEQDGNIICWLCERSQEHRGHNTFLV. The Zn(2+) site is built by Cys96, His99, Cys118, and His124. A coiled-coil region spans residues 132 to 223; the sequence is VEEVAQKYRE…RLVQSENDMV (92 aa). The required for interaction with GABARAP and for autophagy stretch occupies residues 186–199; the sequence is FKQLRDILDCEESN. The B30.2/SPRY domain maps to 280 to 494; that stretch reads PDLKRMLQVL…LPMTLCSPRS (215 aa).

Belongs to the TRIM/RBCC family. As to quaternary structure, can form homodimers and homotrimers. In addition to lower-order dimerization, also exhibits a higher-order multimerization and both low- and high-order multimerizations are essential for its restriction activity. Interacts with BTBD1 and BTBD2. Interacts with PSMC4, PSMC5, PSMD7 and HSPA8/HSC70. Interacts (via B30.2/SPRY domain) with HSPA1A/B. Interacts with PSMC2, MAP3K7/TAK1, TAB2 and TAB3. Interacts with SQSTM1. Interacts with TRIM6 and TRIM34. Interacts with ULK1 (phosphorylated form), GABARAP, GABARAPL1, GABARAPL2, MAP1LC3A, MAP1LC3C and BECN1. In terms of processing, degraded in a proteasome-independent fashion in the absence of viral infection but in a proteasome-dependent fashion following exposure to restriction sensitive virus. Post-translationally, autoubiquitinated in a RING finger- and UBE2D2-dependent manner. Monoubiquitinated by TRIM21. Deubiquitinated by Yersinia YopJ. Ubiquitination may not lead to proteasomal degradation.

It localises to the cytoplasm. Its subcellular location is the nucleus. It catalyses the reaction S-ubiquitinyl-[E2 ubiquitin-conjugating enzyme]-L-cysteine + [acceptor protein]-L-lysine = [E2 ubiquitin-conjugating enzyme]-L-cysteine + N(6)-ubiquitinyl-[acceptor protein]-L-lysine.. The protein operates within protein modification; protein ubiquitination. Its function is as follows. Capsid-specific restriction factor that prevents infection from non-host-adapted retroviruses. Blocks viral replication early in the life cycle, after viral entry but before reverse transcription. In addition to acting as a capsid-specific restriction factor, also acts as a pattern recognition receptor that activates innate immune signaling in response to the retroviral capsid lattice. Binding to the viral capsid triggers its E3 ubiquitin ligase activity, and in concert with the heterodimeric ubiquitin conjugating enzyme complex UBE2V1-UBE2N (also known as UBC13-UEV1A complex) generates 'Lys-63'-linked polyubiquitin chains, which in turn are catalysts in the autophosphorylation of the MAP3K7/TAK1 complex (includes TAK1, TAB2, and TAB3). Activation of the MAP3K7/TAK1 complex by autophosphorylation results in the induction and expression of NF-kappa-B and MAPK-responsive inflammatory genes, thereby leading to an innate immune response in the infected cell. Restricts infection by simian immunodeficiency virus (SIV-mac). Plays a role in regulating autophagy through activation of autophagy regulator BECN1 by causing its dissociation from its inhibitors BCL2 and TAB2. The polypeptide is Tripartite motif-containing protein 5 (TRIM5) (Saimiri sciureus (Common squirrel monkey)).